A 565-amino-acid chain; its full sequence is Perivitellin-2 67 kDa subunit (565 aa).

The signal sequence occupies residues 1-26; the sequence is MSQLRWWVVSQVLLLIAICSLDHSEG. An MACPF domain is found at 27 to 340; it reads ARVCPKIVPG…AKVANLDRLT (314 aa). The invertebrate MACPF Accessory Domain (IMAD) stretch occupies residues 387 to 565; sequence VPAWFSDRTT…CGMSWALIAK (179 aa).

Perivitellin-2 is a dimer of heterodimers held together head-to-tail by non-covalent forces. The heterodimer is composed of the tachylectin subunit (31 kDa) and the MACPF subunit (67 kDa) that are disulfide-linked. PV2 is a very high density lipoprotein (VHDL). It contains 3.75% of lipids. The major lipid classes are free sterols and phospholipids and also have significant quantities of energy-providing triacylglycerides and free fatty acids. Produced by albumen secretory cells. Found in developing eggs.

It is found in the secreted. Its subcellular location is the target cell membrane. Its function is as follows. The egg defensive protein perivitellin-2 is a pore-forming two-subunit glycoprotein that affects both the nervous and digestive systems of mammals. In addition, it is a source of both structural and energetic molecules during embryonic development. The tachylectin subunit (31 kDa) binds target membranes while the MACPF subunit (67 kDa) disrupts lipid bilayers forming large pores (inner diameter of about 5.6 nm) altering the plasma membrance conductance. Both in vivo and in vitro, the protein shows wide pH range stability and is resistant to enzymatic proteolysis from gastrointestinal environments. It is cytotoxic to both epithelial and immune cells from the digestive system of mammals. It induces enterocyte death by a lytic mechanism and disrupts enterocyte monolayers in a dose-dependent manner. After oral administration to mice, it binds enterocytes and induces large dose-dependent morphological changes on their small intestine mucosa, reducing the absorptive surface. Additionally, it is detected in the Peyer's patches where it activates lymphoid follicles and triggers apoptosis. The toxin can also traverse the intestinal barrier and induce oral adaptive immunity with evidence of circulating antibody response. The toxin also shows hemagglutination properties thanks to the tachylectin subunit, but has no hemolytic activity. In addition to enterotoxin activity, the toxin also acts as a neurotoxin, since an intraperitoneal injection can induce paralysis of the mice rear limbs, followed by death. The chain is Perivitellin-2 67 kDa subunit from Pomacea maculata (Giant applesnail).